The chain runs to 373 residues: Protein MGF 360-6L (373 aa).

The protein belongs to the asfivirus MGF 360 family.

Plays a role in virus cell tropism, and may be required for efficient virus replication in macrophages. This is Protein MGF 360-6L from Ornithodoros (relapsing fever ticks).